The sequence spans 485 residues: WAS/WASL-interacting protein family member 3 (485 aa).

Over residues methionine 1–proline 41 the composition is skewed to pro residues. A disordered region spans residues methionine 1–arginine 485. Short sequence motifs (profilin-binding motif) lie at residues valine 3–proline 8, proline 11–proline 16, and alanine 31–proline 36. Positions glycine 56–valine 73 constitute a WH2 domain. Arginine 57 is modified (asymmetric dimethylarginine). The RLRK motif lies at arginine 69–lysine 72. Phosphoserine is present on serine 161. Over residues proline 176–serine 203 the composition is skewed to pro residues. Serine 211 bears the Phosphoserine mark. The segment covering proline 212–proline 246 has biased composition (pro residues). Residues alanine 247–leucine 262 are compositionally biased toward low complexity. Pro residues-rich tracts occupy residues histidine 263–glycine 278 and proline 296–proline 312. Position 392 is a phosphoserine (serine 392). A compositionally biased stretch (polar residues) spans serine 392–glycine 405. The segment covering alanine 415–proline 439 has biased composition (basic and acidic residues). A WASP-binding motif motif is present at residues threonine 424–valine 448.

In terms of assembly, interacts with WASL, and monomeric and filamentous actin. Isoform 1 is expressed in brain and testis and isoform 2 is expressed only in brain (at protein level).

The protein resides in the cytoplasm. Functionally, may be a regulator of cytoskeletal organization (Potential). May have a role in spermatogenesis. This Mus musculus (Mouse) protein is WAS/WASL-interacting protein family member 3 (Wipf3).